A 577-amino-acid polypeptide reads, in one-letter code: Solute carrier family 22 member 16 (577 aa).

The helical transmembrane segment at 23-43 (LYFICAFQNISCGIHYLASVF) threads the bilayer. 4 N-linked (GlcNAc...) asparagine glycosylation sites follow: asparagine 57, asparagine 65, asparagine 68, and asparagine 108. Transmembrane regions (helical) follow at residues 152–172 (WLAMLIQPLFMFGVLLGSVTF), 183–203 (VVLWATSSSMFLFGIAAAFAV), 214–234 (FLAMVASGYLVVGFVYVMEFI), 244–264 (VHLHSFFAVGTLLVALTGYLV), and 268–288 (WLYQMILSTVTVPFILCCWVL). N-linked (GlcNAc...) asparagine glycosylation is found at asparagine 345 and asparagine 352. 6 helical membrane-spanning segments follow: residues 359 to 379 (TLTVWLIWFTGSLGFYSFSLN), 389 to 409 (LNLFLLGVVEIPAYTFVCIAM), 416 to 436 (TVLAYSLFCSALACGVVMVIP), 441 to 461 (ILGVVTAMVGKFAIGAAFGLI), 476 to 496 (LAVGSGSMVCRLASILAPFSV), and 501 to 521 (IWIFIPQLFVGTMALLSGVLT). The disordered stretch occupies residues 543 to 577 (ESENESKSSKLLLTTNNSGLEKTEAITPRDSGLGE). N-linked (GlcNAc...) asparagine glycans are attached at residues asparagine 546 and asparagine 558. Over residues 551 to 560 (SKLLLTTNNS) the composition is skewed to low complexity.

The protein belongs to the major facilitator (TC 2.A.1) superfamily. Organic cation transporter (TC 2.A.1.19) family. As to expression, expressed in testis and epididymis (at protein level). Expressed in endometrium (at protein level); highly expressed during the normal secretory phase, but expression is significantly reduced in the proliferative phase. Expressed at lower levels in adult tissues including bone marrow (at protein level). Expressed in hematopoietic cells, including CD34(+) leukocytes. Expressed in fetal liver (at protein level), brain, lung, kidney, heart, skeletal muscle, spleen and thymus. Expressed in leukemia cells. Abundantly expressed in ovarian cancer clear-cell adenocarcinoma.

The protein localises to the cell membrane. It carries out the reaction (R)-carnitine(in) = (R)-carnitine(out). It catalyses the reaction spermidine(in) = spermidine(out). In terms of biological role, facilitative organic cation transporter that mediates the transport of carnitine as well as the polyamine spermidine. Mediates the partially Na(+)-dependent bidirectional transport of carnitine. May mediate L-carnitine secretion from testis epididymal epithelium into the lumen which is involved in the maturation of spermatozoa. In Homo sapiens (Human), this protein is Solute carrier family 22 member 16.